Consider the following 484-residue polypeptide: MSIFRTASTLALATALALAAGPAFSYSINNSRQIVDDSGKVVQLKGVNVFGFETGNHVMHGLWARNWKDMIVQMQGLGFNAVRLPFCPATLRSDTMPASIDYSRNADLQGLTSLQILDKVIAEFNARGMYVLLDHHTPDCAGISELWYTGSYTEAQWLADLRFVANRYKNVPYVLGLDLKNEPHGAATWGTGNAATDWNKAAERGSAAVLAVAPKWLIAVEGITDNPVCSTNGGIFWGGNLQPLACTPLNIPANRLLLAPHVYGPDVFVQSYFNDSNFPNNMPAIWERHFGQFAGTHALLLGEFGGKYGEGDARDKTWQDALVKYLRSKGINQGFYWSWNPNSGDTGGILRDDWTSVRQDKMTLLRTLWGTAGNTTPTPTPTPTPTPTPTPTPTPTPTPGTSTFSTKVIVDNSWNGGYCNRVQVTNTGTASGTWSIAVPVTGTVNNAWNATWSQSGSTLRASGVDFNRTLAAGATAEFGFCAAS.

The first 25 residues, 1–25 (MSIFRTASTLALATALALAAGPAFS), serve as a signal peptide directing secretion. The active-site Proton donor is Glu182. Glu303 acts as the Nucleophile in catalysis. A disordered region spans residues 370–402 (GTAGNTTPTPTPTPTPTPTPTPTPTPTPTPGTS). Residues 375–399 (TTPTPTPTPTPTPTPTPTPTPTPTP) form a thr-Pro repeats ('hinge') (Pro-Thr box) region. Over residues 378 to 398 (TPTPTPTPTPTPTPTPTPTPT) the composition is skewed to pro residues. In terms of domain architecture, CBM2 spans 395-484 (PTPTPGTSTF…TAEFGFCAAS (90 aa)).

This sequence belongs to the glycosyl hydrolase 5 (cellulase A) family.

The enzyme catalyses Endohydrolysis of (1-&gt;4)-beta-D-glucosidic linkages in cellulose, lichenin and cereal beta-D-glucans.. This is Major extracellular endoglucanase (engXCA) from Xanthomonas campestris pv. campestris (strain ATCC 33913 / DSM 3586 / NCPPB 528 / LMG 568 / P 25).